We begin with the raw amino-acid sequence, 262 residues long: Trypsin theta (262 aa).

Positions 1–19 (MHRLVVLLVCLAVGSACAG) are cleaved as a signal peptide. Residues 20–34 (TVGVSNGDPFEREGR) constitute a propeptide, activation peptide. The Peptidase S1 domain maps to 35–260 (IVGGEDTTIG…LRKWILNASE (226 aa)). An intrachain disulfide couples C61 to C77. Residues H76 and D121 each act as charge relay system in the active site. 2 disulfides stabilise this stretch: C186/C203 and C212/C236. Catalysis depends on S216, which acts as the Charge relay system.

This sequence belongs to the peptidase S1 family.

Its subcellular location is the secreted. The protein resides in the extracellular space. The enzyme catalyses Preferential cleavage: Arg-|-Xaa, Lys-|-Xaa.. This chain is Trypsin theta (thetaTry), found in Drosophila melanogaster (Fruit fly).